A 485-amino-acid chain; its full sequence is Kynureninase 1 (485 aa).

Pyridoxal 5'-phosphate is bound by residues leucine 155, threonine 156, 183-186, aspartate 267, histidine 270, and tyrosine 292; that span reads FPSD. Residue lysine 293 is modified to N6-(pyridoxal phosphate)lysine. Pyridoxal 5'-phosphate is bound by residues tryptophan 330 and asparagine 358.

The protein belongs to the kynureninase family. As to quaternary structure, homodimer. Pyridoxal 5'-phosphate is required as a cofactor.

It is found in the cytoplasm. The enzyme catalyses L-kynurenine + H2O = anthranilate + L-alanine + H(+). It catalyses the reaction 3-hydroxy-L-kynurenine + H2O = 3-hydroxyanthranilate + L-alanine + H(+). It participates in amino-acid degradation; L-kynurenine degradation; L-alanine and anthranilate from L-kynurenine: step 1/1. The protein operates within cofactor biosynthesis; NAD(+) biosynthesis; quinolinate from L-kynurenine: step 2/3. In terms of biological role, catalyzes the cleavage of L-kynurenine (L-Kyn) and L-3-hydroxykynurenine (L-3OHKyn) into anthranilic acid (AA) and 3-hydroxyanthranilic acid (3-OHAA), respectively. The sequence is that of Kynureninase 1 (kyn-1) from Neurospora crassa (strain ATCC 24698 / 74-OR23-1A / CBS 708.71 / DSM 1257 / FGSC 987).